Here is a 122-residue protein sequence, read N- to C-terminus: Large ribosomal subunit protein uL14 (122 aa).

The protein belongs to the universal ribosomal protein uL14 family. Part of the 50S ribosomal subunit. Forms a cluster with proteins L3 and L19. In the 70S ribosome, L14 and L19 interact and together make contacts with the 16S rRNA in bridges B5 and B8.

Its function is as follows. Binds to 23S rRNA. Forms part of two intersubunit bridges in the 70S ribosome. In Ralstonia nicotianae (strain ATCC BAA-1114 / GMI1000) (Ralstonia solanacearum), this protein is Large ribosomal subunit protein uL14.